A 217-amino-acid chain; its full sequence is Octanoyltransferase (217 aa).

One can recognise a BPL/LPL catalytic domain in the interval 32–207 (SESPDELWIV…TFSQLLGYQH (176 aa)). Residues 71–78 (RGGQVTYH), 138–140 (SLG), and 151–153 (GLA) contribute to the substrate site. Cysteine 169 functions as the Acyl-thioester intermediate in the catalytic mechanism.

Belongs to the LipB family.

It localises to the cytoplasm. It carries out the reaction octanoyl-[ACP] + L-lysyl-[protein] = N(6)-octanoyl-L-lysyl-[protein] + holo-[ACP] + H(+). Its pathway is protein modification; protein lipoylation via endogenous pathway; protein N(6)-(lipoyl)lysine from octanoyl-[acyl-carrier-protein]: step 1/2. In terms of biological role, catalyzes the transfer of endogenously produced octanoic acid from octanoyl-acyl-carrier-protein onto the lipoyl domains of lipoate-dependent enzymes. Lipoyl-ACP can also act as a substrate although octanoyl-ACP is likely to be the physiological substrate. This is Octanoyltransferase from Shewanella sp. (strain W3-18-1).